The following is a 588-amino-acid chain: Lysophospholipase 2 (588 aa).

Residues 15 to 38 (NRALPNAPDGYTPQGETCPSKRPS) are disordered. One can recognise a PLA2c domain in the interval 31 to 574 (TCPSKRPSIR…KTYCWNGTIN (544 aa)). N-linked (GlcNAc...) asparagine glycosylation is found at N41, N58, N77, N84, N88, N119, N123, N157, N167, N228, N272, N302, N340, N431, N449, N478, N481, N501, N510, N529, N553, N570, and N574.

Belongs to the lysophospholipase family.

It catalyses the reaction a 1-acyl-sn-glycero-3-phosphocholine + H2O = sn-glycerol 3-phosphocholine + a fatty acid + H(+). Catalyzes the release of fatty acids from lysophospholipids. The sequence is that of Lysophospholipase 2 (plb2) from Aspergillus fumigatus (strain ATCC MYA-4609 / CBS 101355 / FGSC A1100 / Af293) (Neosartorya fumigata).